A 131-amino-acid chain; its full sequence is uncharacterized protein (131 aa).

Transmembrane regions (helical) follow at residues Val68–Ile88 and Val94–Ile114.

Its subcellular location is the cell membrane. This is an uncharacterized protein from Methanocaldococcus jannaschii (strain ATCC 43067 / DSM 2661 / JAL-1 / JCM 10045 / NBRC 100440) (Methanococcus jannaschii).